A 268-amino-acid polypeptide reads, in one-letter code: MADRPSWTGYLKVSLVTCPVTMMPATTGSETVRFHTINRRTGHRVVSRYVDAQSGAPVADDEQVLGYPRDDDHYVLLEDEELESVALDSTRTIDIESFVPAGSIGWVWYDAPHFLMPDDTIGVEAFAVIRAAMEAAGMVGIARLVLYRRERAVLLEPRGKGIVLWTLHDGNAVRNGGHPAARTRPASEAESADSPEMKLLTALIDRQTQPWDPEMVRDPVQERLLDIIAARQKGRKRAPAREAAKPKTGNVVSILDALRASLAQDGTS.

One can recognise a Ku domain in the interval 13–175 (VSLVTCPVTM…TLHDGNAVRN (163 aa)). The tract at residues 174–194 (RNGGHPAARTRPASEAESADS) is disordered.

It belongs to the prokaryotic Ku family. In terms of assembly, homodimer. Interacts with LigD.

In terms of biological role, with LigD forms a non-homologous end joining (NHEJ) DNA repair enzyme, which repairs dsDNA breaks with reduced fidelity. Binds linear dsDNA with 5'- and 3'- overhangs but not closed circular dsDNA nor ssDNA. Recruits and stimulates the ligase activity of LigD. This is Non-homologous end joining protein Ku from Gluconacetobacter diazotrophicus (strain ATCC 49037 / DSM 5601 / CCUG 37298 / CIP 103539 / LMG 7603 / PAl5).